Here is a 232-residue protein sequence, read N- to C-terminus: MPKRGKKYQEALKQFDREKSYDPNEAVVLVKKTATAKFDETIEAHIKLGVDSRHADQQVRGAIVLPHGTGKTAKVLVFAKGEKVTEAEKAGADYVGSDDLVAKIQGENWFDFDVVVATPDMMGVVGRLGRVLGPKGLMPNPKSGTVTFDLERAVKEIKAGKVEYRLDKTNIIHVPIGKASFEEAQLAENFKTLLEAVAKAKPAAAKGQYFKSVSVTSTMGPGIRVNPSKVSE.

The protein belongs to the universal ribosomal protein uL1 family. Part of the 50S ribosomal subunit.

Binds directly to 23S rRNA. The L1 stalk is quite mobile in the ribosome, and is involved in E site tRNA release. In terms of biological role, protein L1 is also a translational repressor protein, it controls the translation of the L11 operon by binding to its mRNA. The polypeptide is Large ribosomal subunit protein uL1 (Alkaliphilus metalliredigens (strain QYMF)).